A 641-amino-acid polypeptide reads, in one-letter code: Chaperone protein DnaK 2 (641 aa).

Thr199 is modified (phosphothreonine; by autocatalysis). Low complexity predominate over residues 601-616 (MAQQQAQAQHAQSSQQ). The segment at 601-641 (MAQQQAQAQHAQSSQQTNDTTGQSSTDDDVFEAEFEEVKDK) is disordered. Residues 626–635 (TDDDVFEAEF) are compositionally biased toward acidic residues.

This sequence belongs to the heat shock protein 70 family.

Acts as a chaperone. This is Chaperone protein DnaK 2 from Photobacterium profundum (strain SS9).